The primary structure comprises 226 residues: uncharacterized protein (226 aa).

This is an uncharacterized protein from Mycobacterium bovis (strain ATCC BAA-935 / AF2122/97).